Reading from the N-terminus, the 118-residue chain is Large ribosomal subunit protein uL18 (118 aa).

A disordered region spans residues 1 to 25; the sequence is MISKPDKNKIRQKRHRRVRGKLSGT. The span at 10-20 shows a compositional bias: basic residues; it reads IRQKRHRRVRG.

The protein belongs to the universal ribosomal protein uL18 family. As to quaternary structure, part of the 50S ribosomal subunit; part of the 5S rRNA/L5/L18/L25 subcomplex. Contacts the 5S and 23S rRNAs.

Functionally, this is one of the proteins that bind and probably mediate the attachment of the 5S RNA into the large ribosomal subunit, where it forms part of the central protuberance. The protein is Large ribosomal subunit protein uL18 of Streptococcus pyogenes serotype M5 (strain Manfredo).